The chain runs to 533 residues: MTKAPVAPVVLVILDGWGYCEETRGNAIAAAKTPVMESLWTAYPHTLIHTSGKAVGLPEGQMGNSEVGHLNIGAGRVVPQELVRISDAVEDGSILSNSALVKICQEVRNRNGKLHLVGLCSEGGVHSHITHLFGLLDLAKEQRISEVCIHAITDGRDTAPTDGINAISALEDYINHVGIGRIVTVSGRYYAMDRDRRWDRIQRAYDVMTQDGAGDGRKAVDVLQASYAEGVNDEFIVPVRIAPGTVESGDGVIFFNFRPDRSRQLTQAFVSPEFTGFARQQIKPLSFVTFTQYDSDLSVSVAFEPQNLTNILGEVIANQGLNQFRTAETEKYAHVTYFFNGGLEEPFAGEDRELVSSPMVATYDKAPAMSATAVTDTAIAAIQKGIYSLIVINYANPDMVGHTGQIEPTIQAIETVDRCLGRLLEGVSKAGGTTIITADHGNAEYMLDEAGNSWTAHTTNPVPLILVEGEKVKIPGYGTNVELRSDGKLADIAPTILDILQLPQPPEMTGRSLLQPAEYDVQSPRTRIPVGLN.

Residues D15 and S65 each contribute to the Mn(2+) site. The active-site Phosphoserine intermediate is the S65. Substrate contacts are provided by residues H126, 156–157 (RD), R188, R194, 258–261 (RPDR), and K331. Residues D398, H402, D439, H440, and H457 each coordinate Mn(2+).

The protein belongs to the BPG-independent phosphoglycerate mutase family. Monomer. The cofactor is Mn(2+).

It carries out the reaction (2R)-2-phosphoglycerate = (2R)-3-phosphoglycerate. Its pathway is carbohydrate degradation; glycolysis; pyruvate from D-glyceraldehyde 3-phosphate: step 3/5. Its function is as follows. Catalyzes the interconversion of 2-phosphoglycerate and 3-phosphoglycerate. In Trichormus variabilis (strain ATCC 29413 / PCC 7937) (Anabaena variabilis), this protein is 2,3-bisphosphoglycerate-independent phosphoglycerate mutase.